A 535-amino-acid polypeptide reads, in one-letter code: CTP synthase (535 aa).

The segment at 1 to 267 (MTKYIFVTGG…DKLVCDHMKL (267 aa)) is amidoligase domain. Position 13 (S13) interacts with CTP. S13 provides a ligand contact to UTP. 14 to 19 (SLGKGI) serves as a coordination point for ATP. Y54 serves as a coordination point for L-glutamine. D71 is a binding site for ATP. The Mg(2+) site is built by D71 and E141. CTP-binding positions include 148-150 (DIE), 188-193 (KTKPTQ), and K224. UTP contacts are provided by residues 188–193 (KTKPTQ) and K224. Positions 292-534 (TISLVGKYVE…IGASVQAAEQ (243 aa)) constitute a Glutamine amidotransferase type-1 domain. G354 serves as a coordination point for L-glutamine. Catalysis depends on C381, which acts as the Nucleophile; for glutamine hydrolysis. Residues 382–385 (LGMQ), E405, and R462 each bind L-glutamine. Residues H507 and E509 contribute to the active site.

It belongs to the CTP synthase family. In terms of assembly, homotetramer.

It catalyses the reaction UTP + L-glutamine + ATP + H2O = CTP + L-glutamate + ADP + phosphate + 2 H(+). The catalysed reaction is L-glutamine + H2O = L-glutamate + NH4(+). It carries out the reaction UTP + NH4(+) + ATP = CTP + ADP + phosphate + 2 H(+). The protein operates within pyrimidine metabolism; CTP biosynthesis via de novo pathway; CTP from UDP: step 2/2. Its activity is regulated as follows. Allosterically activated by GTP, when glutamine is the substrate; GTP has no effect on the reaction when ammonia is the substrate. The allosteric effector GTP functions by stabilizing the protein conformation that binds the tetrahedral intermediate(s) formed during glutamine hydrolysis. Inhibited by the product CTP, via allosteric rather than competitive inhibition. Functionally, catalyzes the ATP-dependent amination of UTP to CTP with either L-glutamine or ammonia as the source of nitrogen. Regulates intracellular CTP levels through interactions with the four ribonucleotide triphosphates. This is CTP synthase from Bacillus velezensis (strain DSM 23117 / BGSC 10A6 / LMG 26770 / FZB42) (Bacillus amyloliquefaciens subsp. plantarum).